The following is a 351-amino-acid chain: Carbamoyl phosphate synthase small chain (351 aa).

A CPSase region spans residues 1–171 (MKGIIYLEDG…IIHIAGNGNK (171 aa)). L-glutamine-binding residues include serine 45, glycine 219, and glycine 221. Residues 171–351 (KVAVMDFGIK…TYLFDQFVNL (181 aa)) form the Glutamine amidotransferase type-1 domain. Cysteine 246 acts as the Nucleophile in catalysis. Residues leucine 247, glutamine 250, asparagine 288, glycine 290, and tyrosine 291 each contribute to the L-glutamine site. Catalysis depends on residues histidine 331 and glutamate 333.

Belongs to the CarA family. In terms of assembly, composed of two chains; the small (or glutamine) chain promotes the hydrolysis of glutamine to ammonia, which is used by the large (or ammonia) chain to synthesize carbamoyl phosphate. Tetramer of heterodimers (alpha,beta)4.

The catalysed reaction is hydrogencarbonate + L-glutamine + 2 ATP + H2O = carbamoyl phosphate + L-glutamate + 2 ADP + phosphate + 2 H(+). The enzyme catalyses L-glutamine + H2O = L-glutamate + NH4(+). It functions in the pathway amino-acid biosynthesis; L-arginine biosynthesis; carbamoyl phosphate from bicarbonate: step 1/1. It participates in pyrimidine metabolism; UMP biosynthesis via de novo pathway; (S)-dihydroorotate from bicarbonate: step 1/3. Functionally, small subunit of the glutamine-dependent carbamoyl phosphate synthetase (CPSase). CPSase catalyzes the formation of carbamoyl phosphate from the ammonia moiety of glutamine, carbonate, and phosphate donated by ATP, constituting the first step of 2 biosynthetic pathways, one leading to arginine and/or urea and the other to pyrimidine nucleotides. The small subunit (glutamine amidotransferase) binds and cleaves glutamine to supply the large subunit with the substrate ammonia. This chain is Carbamoyl phosphate synthase small chain, found in Clostridium acetobutylicum (strain ATCC 824 / DSM 792 / JCM 1419 / IAM 19013 / LMG 5710 / NBRC 13948 / NRRL B-527 / VKM B-1787 / 2291 / W).